An 87-amino-acid polypeptide reads, in one-letter code: Putative regulatory protein CHY_1489 (87 aa).

The protein belongs to the RemA family.

The protein is Putative regulatory protein CHY_1489 of Carboxydothermus hydrogenoformans (strain ATCC BAA-161 / DSM 6008 / Z-2901).